Consider the following 271-residue polypeptide: uncharacterized protein (271 aa).

This is an uncharacterized protein from Mycobacterium tuberculosis (strain CDC 1551 / Oshkosh).